A 329-amino-acid chain; its full sequence is MQFIDQAIIDVKAGSGGDGISAFRREKYVPAGGPAGGDGGQGGNVVLEADDNLQTLLDFKFQKLISAENGQRGGPNKCTGASGKDTVLKVPCGTEVRHLSTNIILGDLTNKGQQLIVAFGGKGGFGNARYLSNSNRAPEKFTEGKVGEEWSLQLELKLLAEVGIIGLPNAGKSTLISVLSSARPKIADYPFTTLIPNLGVVRRPSGDGTVFADIPGLISGASKGIGLGHDFLRHIERTKVLLHLIDSASTDPINDFKTINEELTSYGHGLISRPRIFVLNKKELLNENEIKKLLNKIEKMTMKKVHIISAVTKFGLDDLLSSIWNELGY.

Positions 1-159 constitute an Obg domain; the sequence is MQFIDQAIID…WSLQLELKLL (159 aa). The OBG-type G domain occupies 160-328; sequence AEVGIIGLPN…LLSSIWNELG (169 aa). Residues 166–173, 191–195, 213–216, 280–283, and 309–311 contribute to the ATP site; these read GLPNAGKS, FTTLI, DIPG, NKKE, and SAV. The Mg(2+) site is built by Ser173 and Thr193.

The protein belongs to the TRAFAC class OBG-HflX-like GTPase superfamily. OBG GTPase family. Monomer. Mg(2+) serves as cofactor.

It localises to the cytoplasm. Its function is as follows. An essential GTPase which binds GTP, GDP and possibly (p)ppGpp with moderate affinity, with high nucleotide exchange rates and a fairly low GTP hydrolysis rate. Plays a role in control of the cell cycle, stress response, ribosome biogenesis and in those bacteria that undergo differentiation, in morphogenesis control. This is GTPase Obg from Prochlorococcus marinus (strain NATL2A).